Here is a 453-residue protein sequence, read N- to C-terminus: Acyl-coenzyme A thioesterase 2, mitochondrial (453 aa).

The N-terminal 42 residues, 1–42 (MVASSFAVLRASRLCQQDWKSWARLFVPPPLSTGGRTTWART), are a transit peptide targeting the mitochondrion. N6-acetyllysine is present on K83. Residues S273, D365, and H399 each act as charge relay system in the active site. K447 is subject to N6-succinyllysine.

Belongs to the C/M/P thioester hydrolase family. Monomer. Highly expressed in brown and white adipose tissue, muscle, heart, kidney, lung, adrenal gland and spleen; weakly expressed in intestine, testis and brain.

The protein resides in the mitochondrion matrix. The enzyme catalyses hexadecanoyl-CoA + H2O = hexadecanoate + CoA + H(+). It carries out the reaction tetradecanoyl-CoA + H2O = tetradecanoate + CoA + H(+). It catalyses the reaction octadecanoyl-CoA + H2O = octadecanoate + CoA + H(+). The catalysed reaction is eicosanoyl-CoA + H2O = eicosanoate + CoA + H(+). The enzyme catalyses decanoyl-CoA + H2O = decanoate + CoA + H(+). It carries out the reaction dodecanoyl-CoA + H2O = dodecanoate + CoA + H(+). It catalyses the reaction (9Z)-octadecenoyl-CoA + H2O = (9Z)-octadecenoate + CoA + H(+). The catalysed reaction is (9Z)-hexadecenoyl-CoA + H2O = (9Z)-hexadecenoate + CoA + H(+). The enzyme catalyses (9E)-octadecenoyl-CoA + H2O = (9E)-octadecenoate + CoA + H(+). It carries out the reaction (9Z,12Z)-octadecadienoyl-CoA + H2O = (9Z,12Z)-octadecadienoate + CoA + H(+). It functions in the pathway lipid metabolism; fatty acid metabolism. In terms of biological role, catalyzes the hydrolysis of acyl-CoAs into free fatty acids and coenzyme A (CoASH), regulating their respective intracellular levels. Displays higher activity toward long chain acyl CoAs (C14-C20). The enzyme is involved in enhancing the hepatic fatty acid oxidation in mitochondria. The polypeptide is Acyl-coenzyme A thioesterase 2, mitochondrial (Acot2) (Mus musculus (Mouse)).